Reading from the N-terminus, the 82-residue chain is UPF0180 protein BAA_1480 (82 aa).

Belongs to the UPF0180 family.

The sequence is that of UPF0180 protein BAA_1480 from Bacillus anthracis (strain A0248).